A 167-amino-acid polypeptide reads, in one-letter code: MNNIAYIALGSNIGDRETYLRQAVALLHQHAAVTVTKVSSIYETDPVGYEDQAQFLNMAVEIKTSLNPFELLELTQQIENELGRTREVRWGPRTADLDILLFNRENIETEQLIVPHPRMYERLFVLAPLAEICQQVEKEATSAETDQEGVRVWKQKSGVDEFVHSES.

Belongs to the HPPK family.

It catalyses the reaction 6-hydroxymethyl-7,8-dihydropterin + ATP = (7,8-dihydropterin-6-yl)methyl diphosphate + AMP + H(+). It participates in cofactor biosynthesis; tetrahydrofolate biosynthesis; 2-amino-4-hydroxy-6-hydroxymethyl-7,8-dihydropteridine diphosphate from 7,8-dihydroneopterin triphosphate: step 4/4. Functionally, catalyzes the transfer of pyrophosphate from adenosine triphosphate (ATP) to 6-hydroxymethyl-7,8-dihydropterin, an enzymatic step in folate biosynthesis pathway. In Bacillus subtilis (strain 168), this protein is 2-amino-4-hydroxy-6-hydroxymethyldihydropteridine pyrophosphokinase (folK).